We begin with the raw amino-acid sequence, 92 residues long: MSCQQNQKQCQPPPKCPSPKCPPKNPVQCLPPASSGCAPSSGGCGPSSEGGCFLNHHRRHHRCRRQRSNSCDRGSGQQGGGSGCCHGSGGCC.

The segment covering 1–10 (MSCQQNQKQC) has biased composition (low complexity). Disordered regions lie at residues 1–22 (MSCQQNQKQCQPPPKCPSPKCP) and 64–92 (RRQRSNSCDRGSGQQGGGSGCCHGSGGCC). The span at 11 to 22 (QPPPKCPSPKCP) shows a compositional bias: pro residues. Gly residues predominate over residues 76–92 (GQQGGGSGCCHGSGGCC).

This sequence belongs to the LCE family. In terms of assembly, interacts with CYSRT1. In terms of tissue distribution, skin-specific. Expression was readily detected in adult trunk skin, adult arm skin, fetal skin, penal skin, vulva, esophagus and tongue. Not expressed in the cervix, rectum, lung, colon, or placenta.

Its function is as follows. Precursors of the cornified envelope of the stratum corneum. The sequence is that of Late cornified envelope protein 3E (LCE3E) from Homo sapiens (Human).